An 83-amino-acid polypeptide reads, in one-letter code: ATP synthase subunit c 2 (83 aa).

2 helical membrane passes run 8–28 and 58–78; these read IASILGAAFAVGIGSLGPALG and LAMIETMAIYCLVIALLLLFA.

This sequence belongs to the ATPase C chain family. F-type ATPases have 2 components, F(1) - the catalytic core - and F(0) - the membrane proton channel. F(1) has five subunits: alpha(3), beta(3), gamma(1), delta(1), epsilon(1). F(0) has four main subunits: a(1), b(1), b'(1) and c(10-14). The alpha and beta chains form an alternating ring which encloses part of the gamma chain. F(1) is attached to F(0) by a central stalk formed by the gamma and epsilon chains, while a peripheral stalk is formed by the delta, b and b' chains.

It localises to the cell inner membrane. Its function is as follows. F(1)F(0) ATP synthase produces ATP from ADP in the presence of a proton or sodium gradient. F-type ATPases consist of two structural domains, F(1) containing the extramembraneous catalytic core and F(0) containing the membrane proton channel, linked together by a central stalk and a peripheral stalk. During catalysis, ATP synthesis in the catalytic domain of F(1) is coupled via a rotary mechanism of the central stalk subunits to proton translocation. Key component of the F(0) channel; it plays a direct role in translocation across the membrane. A homomeric c-ring of between 10-14 subunits forms the central stalk rotor element with the F(1) delta and epsilon subunits. This is ATP synthase subunit c 2 from Cereibacter sphaeroides (strain ATCC 17029 / ATH 2.4.9) (Rhodobacter sphaeroides).